Consider the following 276-residue polypeptide: Diaminopimelate epimerase (276 aa).

Substrate contacts are provided by Asn-13, Gln-46, and Asn-66. Cys-75 serves as the catalytic Proton donor. Substrate-binding positions include Gly-76 to Asn-77, Asn-159, Asn-192, and Glu-210 to Arg-211. Catalysis depends on Cys-219, which acts as the Proton acceptor. A substrate-binding site is contributed by Gly-220–Thr-221.

This sequence belongs to the diaminopimelate epimerase family. In terms of assembly, homodimer.

Its subcellular location is the cytoplasm. The catalysed reaction is (2S,6S)-2,6-diaminopimelate = meso-2,6-diaminopimelate. The protein operates within amino-acid biosynthesis; L-lysine biosynthesis via DAP pathway; DL-2,6-diaminopimelate from LL-2,6-diaminopimelate: step 1/1. Catalyzes the stereoinversion of LL-2,6-diaminopimelate (L,L-DAP) to meso-diaminopimelate (meso-DAP), a precursor of L-lysine and an essential component of the bacterial peptidoglycan. This Pseudomonas aeruginosa (strain UCBPP-PA14) protein is Diaminopimelate epimerase.